Consider the following 185-residue polypeptide: Threonylcarbamoyl-AMP synthase (185 aa).

One can recognise a YrdC-like domain in the interval 4 to 185; sequence SWRVQQAARE…LATGKVVRPS (182 aa).

It belongs to the SUA5 family. TsaC subfamily.

It localises to the cytoplasm. It carries out the reaction L-threonine + hydrogencarbonate + ATP = L-threonylcarbamoyladenylate + diphosphate + H2O. In terms of biological role, required for the formation of a threonylcarbamoyl group on adenosine at position 37 (t(6)A37) in tRNAs that read codons beginning with adenine. Catalyzes the conversion of L-threonine, HCO(3)(-)/CO(2) and ATP to give threonylcarbamoyl-AMP (TC-AMP) as the acyladenylate intermediate, with the release of diphosphate. The sequence is that of Threonylcarbamoyl-AMP synthase from Pseudomonas fluorescens (strain ATCC BAA-477 / NRRL B-23932 / Pf-5).